A 78-amino-acid chain; its full sequence is Protein SlyX homolog (78 aa).

The protein belongs to the SlyX family.

This is Protein SlyX homolog from Xanthomonas oryzae pv. oryzae (strain MAFF 311018).